The primary structure comprises 643 residues: Alpha-dioxygenase 1 (643 aa).

Catalysis depends on His-167, which acts as the Proton acceptor. Asp-168 contributes to the Ca(2+) binding site. Residue His-172 participates in heme b binding. Thr-220, Trp-222, Asp-224, and Ser-226 together coordinate Ca(2+). Heme b-binding residues include His-392, Arg-489, and Arg-493.

It belongs to the peroxidase family. Heme b serves as cofactor. Ca(2+) is required as a cofactor.

Alpha-dioxygenase that catalyzes the primary oxygenation step of a variety of 14-20 carbon fatty acids, containing up to three unsaturated bonds, into their corresponding 2R-hydroperoxides. Involved in the production of oxylipins that function in cell signaling, wound healing, and protection from infection. The lipid-derived signaling pathway is involved in the initial response of hot pepper plants to pathogen infection. The polypeptide is Alpha-dioxygenase 1 (Capsicum annuum (Capsicum pepper)).